A 33-amino-acid polypeptide reads, in one-letter code: Cytochrome b6-f complex subunit 8 (33 aa).

Residues 2–22 (IFQIGWAALAAIFTFSIAMVV) traverse the membrane as a helical segment.

Belongs to the PetN family. The 4 large subunits of the cytochrome b6-f complex are cytochrome b6, subunit IV (17 kDa polypeptide, PetD), cytochrome f and the Rieske protein, while the 4 small subunits are PetG, PetL, PetM and PetN. The complex functions as a dimer.

Its subcellular location is the cellular thylakoid membrane. Its function is as follows. Component of the cytochrome b6-f complex, which mediates electron transfer between photosystem II (PSII) and photosystem I (PSI), cyclic electron flow around PSI, and state transitions. This Prochlorococcus marinus (strain MIT 9301) protein is Cytochrome b6-f complex subunit 8.